The following is a 551-amino-acid chain: E3 ubiquitin-protein ligase TRIM8 (551 aa).

The segment at 15–56 adopts an RING-type zinc-finger fold; it reads CPICLHVFVEPVQLPCKHNFCRGCIGEAWAKDSGLVRCPECN. 2 B box-type zinc fingers span residues 92–132 and 140–182; these read CVFC…ARGH and VRAW…VCDV. Residues 181–249 are a coiled coil; that stretch reads DVEIRRNEIR…HQLLDEDLRQ (69 aa).

This sequence belongs to the TRIM/RBCC family. As to quaternary structure, homodimer. Interacts with SOCS1 (via) SH2 domain and SOCS box. Interacts with HSP90AB1; prevents nucleus translocation of phosphorylated STAT3 and HSP90AB1. Interacts with MAP3K7/TAK1. Interacts with PIAS3. Interacts with TICAM1. Interacts with TRIM15; this interaction prevents TRIM8 cytoplasmic translocation. In terms of tissue distribution, widely expressed. Expressed in glomerular podocytes of kidneys.

It localises to the cytoplasm. The protein resides in the nucleus. The protein localises to the nuclear body. The enzyme catalyses S-ubiquitinyl-[E2 ubiquitin-conjugating enzyme]-L-cysteine + [acceptor protein]-L-lysine = [E2 ubiquitin-conjugating enzyme]-L-cysteine + N(6)-ubiquitinyl-[acceptor protein]-L-lysine.. The protein operates within protein modification; protein ubiquitination. Its function is as follows. E3 ubiquitin-protein ligase that participates in multiple biological processes including cell survival, differentiation, apoptosis, and in particular, the innate immune response. Participates in the activation of interferon-gamma signaling by promoting proteasomal degradation of the repressor SOCS1. Plays a positive role in the TNFalpha and IL-1beta signaling pathways. Mechanistically, induces the 'Lys-63'-linked polyubiquitination of MAP3K7/TAK1 component leading to the activation of NF-kappa-B. Also modulates STAT3 activity through negative regulation of PIAS3, either by degradation of PIAS3 through the ubiquitin-proteasome pathway or exclusion of PIAS3 from the nucleus. Negatively regulates TLR3/4-mediated innate immune response by catalyzing 'Lys-6'- and 'Lys-33'-linked polyubiquitination of TICAM1 and thereby disrupting the TICAM1-TBK1 interaction. The polypeptide is E3 ubiquitin-protein ligase TRIM8 (TRIM8) (Homo sapiens (Human)).